The sequence spans 416 residues: Serine/threonine transporter SstT (416 aa).

A run of 9 helical transmembrane segments spans residues 14–34 (GSIV…ALLS), 43–63 (FLGT…VFVL), 82–102 (VLVL…VASF), 141–161 (ALAT…GVAL), 192–212 (IGVF…ALMG), 220–240 (LLGS…FLAI), 298–318 (MAGA…TLGV), 339–359 (ASGV…LFGI), and 363–383 (VAMQ…SAET).

This sequence belongs to the dicarboxylate/amino acid:cation symporter (DAACS) (TC 2.A.23) family.

Its subcellular location is the cell inner membrane. The enzyme catalyses L-serine(in) + Na(+)(in) = L-serine(out) + Na(+)(out). The catalysed reaction is L-threonine(in) + Na(+)(in) = L-threonine(out) + Na(+)(out). Its function is as follows. Involved in the import of serine and threonine into the cell, with the concomitant import of sodium (symport system). The protein is Serine/threonine transporter SstT of Laribacter hongkongensis (strain HLHK9).